A 293-amino-acid polypeptide reads, in one-letter code: Probable chromosome 2-partitioning protein ParB (293 aa).

The protein belongs to the ParB family.

Its function is as follows. Involved in chromosome partition. Localize to both poles of the predivisional cell following completion of DNA replication. Binds to the DNA origin of replication. The sequence is that of Probable chromosome 2-partitioning protein ParB (parB2) from Deinococcus radiodurans (strain ATCC 13939 / DSM 20539 / JCM 16871 / CCUG 27074 / LMG 4051 / NBRC 15346 / NCIMB 9279 / VKM B-1422 / R1).